The chain runs to 55 residues: MAGPIREKIRLVSSAGTGHFYTTTKNKRLHPEKMETKKYDPVVRKHVAYKEAKIK.

This sequence belongs to the bacterial ribosomal protein bL33 family.

This is Large ribosomal subunit protein bL33 from Alcanivorax borkumensis (strain ATCC 700651 / DSM 11573 / NCIMB 13689 / SK2).